A 250-amino-acid polypeptide reads, in one-letter code: MRMRLFPAIDLKEGKAVRLLQGRMEDATVYGEQPVEVARKFKEQGADSLHVVDLDGAFAGKPVNDAVILKLIQSSGLRVQVGGGIRTLERIEELLKLGVERVILGTVAVRNPELVEKAVQRFEEAVVIGIDAKDGLVAVQGWAEKTEIKALDLALRMKKVGVKHLVFTDISRDGMLQGPNIQSTVELARLSGLQVVASGGVSRLEDLRLLQEEANRGVSLEGAIVGKALYAGAFSLAEALRVVGQRSEGK.

The active-site Proton acceptor is the Asp-10. The active-site Proton donor is Asp-131.

It belongs to the HisA/HisF family.

The protein resides in the cytoplasm. It catalyses the reaction 1-(5-phospho-beta-D-ribosyl)-5-[(5-phospho-beta-D-ribosylamino)methylideneamino]imidazole-4-carboxamide = 5-[(5-phospho-1-deoxy-D-ribulos-1-ylimino)methylamino]-1-(5-phospho-beta-D-ribosyl)imidazole-4-carboxamide. The protein operates within amino-acid biosynthesis; L-histidine biosynthesis; L-histidine from 5-phospho-alpha-D-ribose 1-diphosphate: step 4/9. The chain is 1-(5-phosphoribosyl)-5-[(5-phosphoribosylamino)methylideneamino] imidazole-4-carboxamide isomerase from Desulfitobacterium hafniense (strain DSM 10664 / DCB-2).